A 500-amino-acid chain; its full sequence is Cytochrome P450 2D26 (500 aa).

At S249 the chain carries Phosphoserine. Heme is bound at residue C446.

It belongs to the cytochrome P450 family. It depends on heme as a cofactor.

It localises to the endoplasmic reticulum membrane. The protein resides in the microsome membrane. It catalyses the reaction an organic molecule + reduced [NADPH--hemoprotein reductase] + O2 = an alcohol + oxidized [NADPH--hemoprotein reductase] + H2O + H(+). Its function is as follows. Cytochromes P450 are a group of heme-thiolate monooxygenases. In liver microsomes, this enzyme is involved in an NADPH-dependent electron transport pathway. It oxidizes a variety of structurally unrelated compounds, including steroids, fatty acids, and xenobiotics. This chain is Cytochrome P450 2D26 (Cyp2d26), found in Rattus norvegicus (Rat).